Reading from the N-terminus, the 49-residue chain is Large ribosomal subunit protein bL32 (49 aa).

Residues 25 to 49 form a disordered region; that stretch reads AKPVKDKDGTYKLPHHINPTTGEYK.

The protein belongs to the bacterial ribosomal protein bL32 family.

The sequence is that of Large ribosomal subunit protein bL32 from Sulfurimonas denitrificans (strain ATCC 33889 / DSM 1251) (Thiomicrospira denitrificans (strain ATCC 33889 / DSM 1251)).